Reading from the N-terminus, the 46-residue chain is Bacteriocin acidocin 8912 (46 aa).

The propeptide occupies 1-20 (MISSHQKTLTDKELALISGG).

It is found in the secreted. Has a bactericidal effect on sensitive cells but not a bacteriolytic effect. This Lactobacillus acidophilus protein is Bacteriocin acidocin 8912 (acdT).